Here is a 477-residue protein sequence, read N- to C-terminus: Glycogen synthase (477 aa).

Lys15 provides a ligand contact to ADP-alpha-D-glucose.

It belongs to the glycosyltransferase 1 family. Bacterial/plant glycogen synthase subfamily.

The catalysed reaction is [(1-&gt;4)-alpha-D-glucosyl](n) + ADP-alpha-D-glucose = [(1-&gt;4)-alpha-D-glucosyl](n+1) + ADP + H(+). It participates in glycan biosynthesis; glycogen biosynthesis. Its function is as follows. Synthesizes alpha-1,4-glucan chains using ADP-glucose. The chain is Glycogen synthase from Myxococcus xanthus (strain DK1622).